We begin with the raw amino-acid sequence, 293 residues long: Epimerase family protein SDR39U1 (293 aa).

Residues 31–32, 58–59, Glu77, Arg82, and Val160 contribute to the NADP(+) site; these read SR and LA.

It belongs to the NAD(P)-dependent epimerase/dehydratase family. SDR39U1 subfamily.

Functionally, putative NADP-dependent oxidoreductase. This chain is Epimerase family protein SDR39U1 (Sdr39u1), found in Mus musculus (Mouse).